The primary structure comprises 232 residues: Myb-related protein 308 (232 aa).

2 HTH myb-type domains span residues 9–61 (KAHT…INYL) and 62–116 (RPDL…RRKL). DNA-binding regions (H-T-H motif) lie at residues 37 to 61 (WRSL…INYL) and 89 to 112 (WSLI…NTHI).

In terms of tissue distribution, expressed in roots, stems, leaves, seed pods and flowers.

The protein resides in the nucleus. In terms of biological role, transcription factor. In Antirrhinum majus (Garden snapdragon), this protein is Myb-related protein 308.